Consider the following 773-residue polypeptide: Preaspterpenacid I synthase sttA (773 aa).

The tract at residues 4–359 (ISDVMKHCVP…RYHRTDLATT (356 aa)) is sesterterpenoid synthase. D105 lines the Mg(2+) pocket. Substrate is bound at residue D105. The substrate stretch occupies residues 211 to 214 (RVNE). N255 is a binding site for substrate. 2 substrate regions span residues 259-263 (SFPKE) and 350-351 (RY). The segment at 360 to 769 (AEDRATLIGK…RMMLLGMGPK (410 aa)) is geranylfarnesyl diphosphate synthase. A disordered region spans residues 423-447 (AFKKRNSRNGKQNGTEGSKSTFTNG). Residues 431 to 447 (NGKQNGTEGSKSTFTNG) are compositionally biased toward polar residues. Isopentenyl diphosphate-binding residues include K493, R496, and H525. Residues D532 and D536 each coordinate Mg(2+). Residue R541 participates in dimethylallyl diphosphate binding. R542 is an isopentenyl diphosphate binding site. Residues K614, T615, Q652, N659, and K669 each coordinate dimethylallyl diphosphate.

In the N-terminal section; belongs to the terpene synthase family. This sequence in the C-terminal section; belongs to the FPP/GGPP synthase family.

The enzyme catalyses 4 isopentenyl diphosphate + dimethylallyl diphosphate = (2E,6E,10E,14E)-geranylfarnesyl diphosphate + 4 diphosphate. It catalyses the reaction (2E,6E,10E,14E)-geranylfarnesyl diphosphate + H2O = preaspterpenacid acid I + diphosphate. Its pathway is secondary metabolite biosynthesis; terpenoid biosynthesis. In terms of biological role, sesterterpenoid synthase; part of the gene cluster that mediates the biosynthesis of aspterpenacids. Performs both prenyl transferase and terpene cyclase activity, converting isopentenyl diphosphate and dimethylallyl diphosphate into geranylfarnesyl diphosphate (GFPP) and then converting GFPP into preaspterpenacid I. C22-oxidative modification of preaspterpenacid I by the cytochrome P450 monooxygenase sttB then leads to preaspterpenacid II. It has still to be determined how preaspterpenacid II is further modified to produce aspterpenacids. The polypeptide is Preaspterpenacid I synthase sttA (Aspergillus terreus (strain NIH 2624 / FGSC A1156)).